A 235-amino-acid chain; its full sequence is Large ribosomal subunit protein uL1 (235 aa).

The protein belongs to the universal ribosomal protein uL1 family. Part of the 50S ribosomal subunit.

Binds directly to 23S rRNA. The L1 stalk is quite mobile in the ribosome, and is involved in E site tRNA release. Its function is as follows. Protein L1 is also a translational repressor protein, it controls the translation of the L11 operon by binding to its mRNA. The chain is Large ribosomal subunit protein uL1 from Prochlorococcus marinus (strain MIT 9301).